The sequence spans 442 residues: Protein translocase subunit SecY (442 aa).

10 helical membrane-spanning segments follow: residues 29–49 (LITI…VPDI), 69–89 (IFTG…LPYI), 126–146 (YIAF…LLRP), 153–173 (PLFI…VMWI), 182–202 (IGNG…PQTL), 217–237 (ITAV…IVFV), 274–294 (VMPI…AGFA), 320–340 (VYTV…ASLI), 377–397 (LTFL…FVEQ), and 400–420 (GVTT…GVAI).

Belongs to the SecY/SEC61-alpha family. Component of the Sec protein translocase complex. Heterotrimer consisting of SecY, SecE and SecG subunits. The heterotrimers can form oligomers, although 1 heterotrimer is thought to be able to translocate proteins. Interacts with the ribosome. Interacts with SecDF, and other proteins may be involved. Interacts with SecA.

The protein resides in the cell inner membrane. It is found in the cellular thylakoid membrane. In terms of biological role, the central subunit of the protein translocation channel SecYEG. Consists of two halves formed by TMs 1-5 and 6-10. These two domains form a lateral gate at the front which open onto the bilayer between TMs 2 and 7, and are clamped together by SecE at the back. The channel is closed by both a pore ring composed of hydrophobic SecY resides and a short helix (helix 2A) on the extracellular side of the membrane which forms a plug. The plug probably moves laterally to allow the channel to open. The ring and the pore may move independently. This is Protein translocase subunit SecY from Synechocystis sp. (strain ATCC 27184 / PCC 6803 / Kazusa).